Here is a 524-residue protein sequence, read N- to C-terminus: Cytochrome P450 4F3 (524 aa).

A helical transmembrane segment spans residues 15–35 (AASPWLLLLLVGASCLLAYIL). Cysteine 468 is a heme binding site.

The protein belongs to the cytochrome P450 family. Heme is required as a cofactor.

It is found in the endoplasmic reticulum membrane. It localises to the microsome membrane. The catalysed reaction is leukotriene B4 + reduced [NADPH--hemoprotein reductase] + O2 = 18-hydroxy-leukotriene B4 + oxidized [NADPH--hemoprotein reductase] + H2O + H(+). It carries out the reaction leukotriene B4 + reduced [NADPH--hemoprotein reductase] + O2 = 19-hydroxy-leukotriene B4 + oxidized [NADPH--hemoprotein reductase] + H2O + H(+). It functions in the pathway lipid metabolism; leukotriene B4 degradation. A cytochrome P450 monooxygenase involved in the metabolism of the pro-inflammatory lipid mediator leukotriene B4 (LTB4). Hydroxylates at the omega-1 and omega-2 positions LTB4. This oxidation step leads to LTB4 inactivation, which is postulated to be a crucial part of the resolution of inflammation. Mechanistically, uses molecular oxygen inserting one oxygen atom into a substrate, and reducing the second into a water molecule, with two electrons provided by NADPH via cytochrome P450 reductase (CPR; NADPH-ferrihemoprotein reductase). This Rattus norvegicus (Rat) protein is Cytochrome P450 4F3.